The chain runs to 453 residues: Allantoinase (453 aa).

His-59, His-61, Lys-146, His-186, His-242, and Asp-315 together coordinate Zn(2+). Lys-146 carries the post-translational modification N6-carboxylysine.

Belongs to the metallo-dependent hydrolases superfamily. Allantoinase family. In terms of assembly, homotetramer. Zn(2+) is required as a cofactor. Post-translationally, carboxylation allows a single lysine to coordinate two zinc ions.

The catalysed reaction is (S)-allantoin + H2O = allantoate + H(+). The protein operates within nitrogen metabolism; (S)-allantoin degradation; allantoate from (S)-allantoin: step 1/1. Functionally, catalyzes the conversion of allantoin (5-ureidohydantoin) to allantoic acid by hydrolytic cleavage of the five-member hydantoin ring. The polypeptide is Allantoinase (Salmonella choleraesuis (strain SC-B67)).